A 1091-amino-acid chain; its full sequence is AP-3 complex subunit beta-1 (1091 aa).

Disordered stretches follow at residues 1 to 32 and 267 to 290; these read MSGN…SPSG and EDNE…KKKP. Basic and acidic residues predominate over residues 267–288; sequence EDNEKNFYESDDEQKEKTDQKK. Serine 276 and serine 609 each carry phosphoserine. Residues 664–807 form a disordered region; sequence AGKAKKENPA…EKEKKTKEDR (144 aa). Residues 667–678 show a composition bias toward basic and acidic residues; it reads AKKENPARKFYS. Composition is skewed to acidic residues over residues 679–695 and 703–718; these read DSEE…DSES and EQDE…SEDS. Basic and acidic residues predominate over residues 719 to 736; sequence SSEHRSDSESVSEVGDKR. 2 positions are modified to phosphoserine: serine 748 and serine 750. The span at 763–775 shows a compositional bias: low complexity; it reads SDSSSTDSSSVEE. Positions 776-789 are enriched in acidic residues; sequence SSSDSESESESESE. Over residues 790 to 807 the composition is skewed to basic and acidic residues; sequence SESKKVTMEKEKKTKEDR.

Belongs to the adaptor complexes large subunit family. In terms of assembly, adaptor protein complex 3 (AP-3) is a heterotetramer composed of two large adaptins (delta-type subunit AP3D1 and beta-type subunit AP3B1 or AP3B2), a medium adaptin (mu-type subunit AP3M1 or AP3M2) and a small adaptin (sigma-type subunit APS1 or AP3S2). AP-3 associates with the BLOC-1 complex. Interacts with KIF3A; interaction is direct; interaction is impaired by pyrophosphorylation of AP3B1. In terms of processing, phosphorylated on serine residues. Post-translationally, pyrophosphorylation by 5-diphosphoinositol pentakisphosphate (5-IP7) impairs interaction with KIF3A. Serine pyrophosphorylation is achieved by Mg(2+)-dependent, but enzyme independent transfer of a beta-phosphate from a inositol pyrophosphate to a pre-phosphorylated serine residue.

The protein localises to the cytoplasmic vesicle. It localises to the clathrin-coated vesicle membrane. Its subcellular location is the golgi apparatus. Its function is as follows. Subunit of non-clathrin- and clathrin-associated adaptor protein complex 3 (AP-3) that plays a role in protein sorting in the late-Golgi/trans-Golgi network (TGN) and/or endosomes. The AP complexes mediate both the recruitment of clathrin to membranes and the recognition of sorting signals within the cytosolic tails of transmembrane cargo molecules. AP-3 appears to be involved in the sorting of a subset of transmembrane proteins targeted to lysosomes and lysosome-related organelles. In concert with the BLOC-1 complex, AP-3 is required to target cargos into vesicles assembled at cell bodies for delivery into neurites and nerve terminals. The chain is AP-3 complex subunit beta-1 (AP3B1) from Canis lupus familiaris (Dog).